The chain runs to 371 residues: uncharacterized protein (371 aa).

It belongs to the serpin family.

This is an uncharacterized protein from Pyrobaculum aerophilum (strain ATCC 51768 / DSM 7523 / JCM 9630 / CIP 104966 / NBRC 100827 / IM2).